The sequence spans 76 residues: Accessory gland-specific peptide 57Dc (76 aa).

The signal sequence occupies residues 1–20 (MHGTHFLILLLLCGVLGSNG).

In terms of processing, cAMP-dependent phosphorylation. Lumen fluid of male accessory glands, becomes seminal fluid.

Its subcellular location is the secreted. Its function is as follows. Transferred from male to female during mating and may affect egglaying and behavior after mating. This Drosophila melanogaster (Fruit fly) protein is Accessory gland-specific peptide 57Dc (Mst57Dc).